The primary structure comprises 71 residues: MKSMDKLTTGVAYGTSAGNAGFWALQLLDKVTPSQWAAIGVLGSLVFGLLTYLTNLYFKIKEDRRKAARGE.

It belongs to the lambda phage S protein family.

This is Prophage lysis protein S homolog EssQ (essQ) from Escherichia coli (strain K12).